The primary structure comprises 128 residues: DNA-directed RNA polymerase subunit omega (128 aa).

This sequence belongs to the RNA polymerase subunit omega family. In terms of assembly, the RNAP catalytic core consists of 2 alpha, 1 beta, 1 beta' and 1 omega subunit. When a sigma factor is associated with the core the holoenzyme is formed, which can initiate transcription.

The enzyme catalyses RNA(n) + a ribonucleoside 5'-triphosphate = RNA(n+1) + diphosphate. In terms of biological role, promotes RNA polymerase assembly. Latches the N- and C-terminal regions of the beta' subunit thereby facilitating its interaction with the beta and alpha subunits. The protein is DNA-directed RNA polymerase subunit omega of Azorhizobium caulinodans (strain ATCC 43989 / DSM 5975 / JCM 20966 / LMG 6465 / NBRC 14845 / NCIMB 13405 / ORS 571).